An 851-amino-acid polypeptide reads, in one-letter code: ATP-dependent DNA helicase DDX31 (851 aa).

Residues 1 to 196 form a disordered region; the sequence is MAPDLASQRH…STSDRNQEER (196 aa). The short motif at 230-259 is the Q motif element; the sequence is AAFHELGLHPHLISTINTVLKMSSMTSVQK. One can recognise a Helicase ATP-binding domain in the interval 262-443; it reads IPVLLEGRDA…DISLHDPVSI (182 aa). 275–282 is a binding site for ATP; sequence SQTGSGKT. The DEAD box motif lies at 388-391; that stretch reads DEAD. A Helicase C-terminal domain is found at 480–659; it reads SLKQHVTVVP…VSEIKMEDIL (180 aa). 2 disordered regions span residues 762–784 and 804–851; these read KKRK…HSLA and KQNA…SQKV. Arg-828 carries the post-translational modification Omega-N-methylarginine. The segment covering 841–851 has biased composition (basic and acidic residues); the sequence is VQRDSKTSQKV.

The protein belongs to the DEAD box helicase family. DDX31/DBP7 subfamily. As to quaternary structure, interacts with NPM1; this interaction prevents interaction between NPM1 and HDM2. Weakly or undetectably expressed in normal organs. Up-regulated in renal cell carcinoma.

It is found in the nucleus. The protein resides in the nucleolus. It carries out the reaction ATP + H2O = ADP + phosphate + H(+). Its function is as follows. May have DNA helicase activity and RNA helicase activity. Probably have ssDNA and RNA dependent ATPase activity. Plays a role in ribosome biogenesis and TP53/p53 regulation through its interaction with NPM1. This chain is ATP-dependent DNA helicase DDX31, found in Homo sapiens (Human).